The sequence spans 350 residues: DNA polymerase IV (350 aa).

In terms of domain architecture, UmuC spans 5–181 (IMHYDMDAFY…KKIKIIPGVG (177 aa)). Mg(2+) is bound by residues D9 and D99. The active site involves E100.

The protein belongs to the DNA polymerase type-Y family. As to quaternary structure, monomer. Mg(2+) serves as cofactor.

It localises to the cytoplasm. It catalyses the reaction DNA(n) + a 2'-deoxyribonucleoside 5'-triphosphate = DNA(n+1) + diphosphate. In terms of biological role, poorly processive, error-prone DNA polymerase involved in untargeted mutagenesis. Copies undamaged DNA at stalled replication forks, which arise in vivo from mismatched or misaligned primer ends. These misaligned primers can be extended by PolIV. Exhibits no 3'-5' exonuclease (proofreading) activity. May be involved in translesional synthesis, in conjunction with the beta clamp from PolIII. This is DNA polymerase IV from Fusobacterium nucleatum subsp. nucleatum (strain ATCC 25586 / DSM 15643 / BCRC 10681 / CIP 101130 / JCM 8532 / KCTC 2640 / LMG 13131 / VPI 4355).